Reading from the N-terminus, the 856-residue chain is Inactive rhomboid protein 1 (856 aa).

The disordered stretch occupies residues 1-21 (MGEARRDSSSSLQHKKPPWLK). Residues 1–412 (MGEARRDSSS…HRPFFTYWLT (412 aa)) lie on the Cytoplasmic side of the membrane. Phosphoserine occurs at positions 76 and 176. 2 positions are modified to phosphothreonine: Thr-180 and Thr-183. The residue at position 391 (Ser-391) is a Phosphoserine. The helical transmembrane segment at 413-433 (FVHSLVTILAVCIYGVAPVGF) threads the bilayer. Topologically, residues 434-656 (SQHETVDSVL…NPEVPDQFYR (223 aa)) are lumenal. An N-linked (GlcNAc...) asparagine glycan is attached at Asn-584. The helical transmembrane segment at 657 to 677 (LWLSLFLHAGVLHCLVSVCFQ) threads the bilayer. Over 678–692 (MTVLRDLEKLAGWHR) the chain is Cytoplasmic. The helical transmembrane segment at 693–713 (IAIIYLLSGVTGNLASAIFLP) threads the bilayer. The Lumenal segment spans residues 714 to 715 (YR). The chain crosses the membrane as a helical span at residues 716–736 (AEVGPAGSQFGILACLFVELF). The Cytoplasmic segment spans residues 737–747 (QSWQILARPWR). A helical membrane pass occupies residues 748-768 (AFFKLLAVVLFLFTFGLLPWI). The Lumenal portion of the chain corresponds to 769 to 773 (DNFAH). A helical membrane pass occupies residues 774 to 794 (ISGFISGLFLSFAFLPYISFG). Over 795 to 804 (KFDLYRKRCQ) the chain is Cytoplasmic. A helical membrane pass occupies residues 805–825 (IIVFQLVFLGLLAGLVVLFYF). Topologically, residues 826-856 (YPVRCEWCEFLTCIPFTDKFCEKYELDAQLH) are lumenal.

It belongs to the peptidase S54 family. As to quaternary structure, homodimer, or homooligomer. Interacts with TGFA and HBEGF. Interacts with EGF; may retain EGF in the endoplasmic reticulum and regulates its degradation through the endoplasmic reticulum-associated degradation (ERAD). Interacts (via cytoplasmic N-terminus) with FRMD8/iTAP; this interaction leads to mutual protein stabilization. Interacts with ADAM17/TACE.

Its subcellular location is the endoplasmic reticulum membrane. The protein resides in the golgi apparatus membrane. Regulates ADAM17 protease, a sheddase of the epidermal growth factor (EGF) receptor ligands and TNF, thereby plays a role in sleep, cell survival, proliferation, migration and inflammation. Does not exhibit any protease activity on its own. The sequence is that of Inactive rhomboid protein 1 (RHBDF1) from Bos taurus (Bovine).